A 108-amino-acid polypeptide reads, in one-letter code: UPF0060 membrane protein Mvan_3406 (108 aa).

4 helical membrane passes run 7–27, 32–52, 61–81, and 87–107; these read LLFV…WQGV, GLTW…VAAF, VLAA…VVAD, and RWDI…MYAP.

This sequence belongs to the UPF0060 family.

The protein localises to the cell membrane. The chain is UPF0060 membrane protein Mvan_3406 from Mycolicibacterium vanbaalenii (strain DSM 7251 / JCM 13017 / BCRC 16820 / KCTC 9966 / NRRL B-24157 / PYR-1) (Mycobacterium vanbaalenii).